Here is a 400-residue protein sequence, read N- to C-terminus: Phosphoglycerate kinase (400 aa).

Residues 23–25 (DLN), R38, 61–64 (HFGR), R120, and R153 contribute to the substrate site. ATP-binding positions include K203, E325, and 355-358 (GGDT).

This sequence belongs to the phosphoglycerate kinase family. As to quaternary structure, monomer.

Its subcellular location is the cytoplasm. It catalyses the reaction (2R)-3-phosphoglycerate + ATP = (2R)-3-phospho-glyceroyl phosphate + ADP. It participates in carbohydrate degradation; glycolysis; pyruvate from D-glyceraldehyde 3-phosphate: step 2/5. This is Phosphoglycerate kinase from Agrobacterium fabrum (strain C58 / ATCC 33970) (Agrobacterium tumefaciens (strain C58)).